The primary structure comprises 698 residues: Pentatricopeptide repeat-containing protein 1, mitochondrial (698 aa).

The segment at Ser49–Gly88 is disordered. Residues Asn62–Thr78 show a composition bias toward polar residues. PPR repeat units lie at residues Thr133–Pro169, Met170–Pro204, Ser205–Leu243, Asn244–Val278, Thr279–Pro315, and Ser316–Leu352. Residues Gln392–Ser419 form a disordered region. 3 PPR repeats span residues Asp517 to Pro551, Asn552 to Pro583, and Asn584 to Val618. Residues His670–Arg698 are disordered. Basic and acidic residues predominate over residues Lys678–Asp690.

It belongs to the PTCD1 family. In terms of assembly, associates with mitochondrial leucine tRNAs. Interacts with ELAC2.

Its subcellular location is the mitochondrion. It localises to the mitochondrion matrix. In terms of biological role, mitochondrial protein implicated in negative regulation of leucine tRNA levels, as well as negative regulation of mitochondria-encoded proteins and COX activity. Also affects the 3'-processing of mitochondrial tRNAs. This chain is Pentatricopeptide repeat-containing protein 1, mitochondrial (PTCD1), found in Pongo abelii (Sumatran orangutan).